The following is a 293-amino-acid chain: MTDSTRSLRNCLAPAKLNLFLHITGRRPNGYHDLQSVFQLLNWGDTLHFTLRDDGRVARVTDVPGVPEESDLVVRAANLLKAHTGTAHGVDIEIDKCLPMGAGLGGGSSDAATTLLALNRLWQLDLPRAELQSLAVKLGADVPFFIFGKNAFAEGIGEELAEVQLPTRWFLVVTPRVHVPTAEIFSDELLTRDSKRVTITDFLAQQNSDAGWPDSFGRNDMQQVVTSKYAEVAQVVKWLYDVTPARMTGSGASVFAAFRSKHEAEAAQAKLPTGWNGAVAESLNEHPLFAFAS.

Residue Lys16 is part of the active site. Residue 99–109 (PMGAGLGGGSS) participates in ATP binding. The active site involves Asp141.

It belongs to the GHMP kinase family. IspE subfamily.

It catalyses the reaction 4-CDP-2-C-methyl-D-erythritol + ATP = 4-CDP-2-C-methyl-D-erythritol 2-phosphate + ADP + H(+). It functions in the pathway isoprenoid biosynthesis; isopentenyl diphosphate biosynthesis via DXP pathway; isopentenyl diphosphate from 1-deoxy-D-xylulose 5-phosphate: step 3/6. Its function is as follows. Catalyzes the phosphorylation of the position 2 hydroxy group of 4-diphosphocytidyl-2C-methyl-D-erythritol. The sequence is that of 4-diphosphocytidyl-2-C-methyl-D-erythritol kinase from Burkholderia lata (strain ATCC 17760 / DSM 23089 / LMG 22485 / NCIMB 9086 / R18194 / 383).